The sequence spans 115 residues: DNA-directed RNA polymerase II subunit RPB11-b1 (115 aa).

It belongs to the archaeal Rpo11/eukaryotic RPB11/RPC19 RNA polymerase subunit family. In terms of assembly, component of the RNA polymerase II (Pol II) complex consisting of 12 subunits. As to expression, ubiquitously expressed.

Its subcellular location is the nucleus. In terms of biological role, DNA-dependent RNA polymerase catalyzes the transcription of DNA into RNA using the four ribonucleoside triphosphates as substrates. Component of RNA polymerase II which synthesizes mRNA precursors and many functional non-coding RNAs. Pol II is the central component of the basal RNA polymerase II transcription machinery. It is composed of mobile elements that move relative to each other. RPB11 is part of the core element with the central large cleft. This Homo sapiens (Human) protein is DNA-directed RNA polymerase II subunit RPB11-b1 (POLR2J2).